Here is a 1113-residue protein sequence, read N- to C-terminus: MNDWQWLKNRLVNSKTKSVSFWLPQTSSNIIDIAELIKCCSELKNTSINGLIDFLNQQDKLEFNLTRLKEIDVEDGKQLFGIETSVYKHFQNEIARFYKQVNKHFRETGSESLFLALPVIEGINEFNDIFRAPLLYVGVKLKVSPRFERFWLEINKEEIFLNPTIIGVETNKRNSLFKNNYDTTKIDVNDALKVFSELEYEFRMPLTSELKSFSKKAKSDFNTEKRTNYLINNVLLGIFDVKGDQLFQNFNEILNTDPDVLDELLKDRRDLLLENREFREQFDLKDTYLFSHLDIYQQYAVKQALLGDLIIEGPPGTGKSETIVNILVNLVLNNKKVLFVSEKVTALDVVYNRLGSFKHIALFNASVAAEKKRFYNQFAEFETYFTTYFSKKDLDATLPTFEGKWVDDILGAFQALQALYDTKINSGENLFSFKEIVSSFQMLDASYIKIKEYERFDEWVRVFSNPLWLEKHLSYQELKKELSQRWNGIDNFYQLQSLLNQTKKRKVLNYVLEHFEQFNTVISPKHVLFYKPSNKSQLLLKQLKQDVEQYTSLQRFQSPTKFETIKLNFINQVNENPTPWFFSWFIQFHAKPLLEKLVSFESNIIKTKQAYLNGIESYVASCKKLLKTTILNNFFQLYQTNKDELLEICRQAKNPVLKEITWWFKKHFELLKKLFPVHIMTLESAATLTPNQRGLYDYVVIDEASQVFLERAIPILFRADKYIIAGDTKQLKPANFFQSRAEYDVDEEFEDGNIEAAVHSSSLLHFLKNRSRILTLLKFHYRSDSADLIAFTNNRIYDNELIFMNKANADQRVFIVHDVIDGIWKNNRNLQEARDVVQRLEQLTTTNDYKKSLGVICFNKNQADLIEYLIDKQNNPLLNEWRERQNDVGEYEGLFVKNIENVQGDERDIIIFSLGYDRSVNSYGPISKQGGENRLNVAITRAKQRIELFKTNRGEDYNGLSSSSLGSKLLVEYLLYCEAMAKNQGEKITFQAVKRKETKAKYELAVENDFFNQLQAIFGGEFEIKRNVNEGAYFFSFVFYFNNIPYLAIDFNIPIPTSRKQVMEGILYREQFLKKRQWNLINIWIDEWKLNPIGVISKIRSSLAVHQNQHEEI.

313–320 (GPPGTGKS) serves as a coordination point for ATP.

This sequence belongs to the DNA2/NAM7 helicase family.

This is an uncharacterized protein from Mycoplasma genitalium (strain ATCC 33530 / DSM 19775 / NCTC 10195 / G37) (Mycoplasmoides genitalium).